The sequence spans 112 residues: Integration host factor subunit alpha (112 aa).

The protein belongs to the bacterial histone-like protein family. Heterodimer of an alpha and a beta chain.

In terms of biological role, this protein is one of the two subunits of integration host factor, a specific DNA-binding protein that functions in genetic recombination as well as in transcriptional and translational control. This Allorhizobium ampelinum (strain ATCC BAA-846 / DSM 112012 / S4) (Agrobacterium vitis (strain S4)) protein is Integration host factor subunit alpha.